We begin with the raw amino-acid sequence, 451 residues long: Golgi reassembly-stacking protein 2 (451 aa).

Gly-2 is lipidated: N-myristoyl glycine. PDZ GRASP-type domains lie at 15 to 105 and 111 to 199; these read EGYH…FCSF and NVWH…YGYL. The GRASP stretch occupies residues 15-215; that stretch reads EGYHVLRVQE…PFEEGKKISL (201 aa). 2 positions are modified to dimethylated arginine: Arg-30 and Arg-47. The interval 194–199 is important for membrane binding; sequence IGYGYL. Phosphoserine is present on Ser-214. Thr-222 is subject to Phosphothreonine. Thr-225 is subject to Phosphothreonine; by MAPK. The span at 236–252 shows a compositional bias: low complexity; that stretch reads LSSVSPPSLSPPGTTGV. Disordered stretches follow at residues 236–255 and 377–451; these read LSSV…VEQS and EGSS…SEPS. Over residues 410–424 the composition is skewed to polar residues; it reads SSLTVDVTSPASKVP. At Ser-411 the chain carries Phosphoserine. Residues Thr-417 and Thr-435 each carry the phosphothreonine modification. Phosphoserine is present on residues Ser-443 and Ser-448.

This sequence belongs to the GORASP family. In terms of assembly, homodimer. Homooligomer. ER stress induces phosphorylation-dependent monomerization. Interacts with BLZF1/Golgin 45. Identified in a complex with RAB2 and GORASP2. Interacts with JAM2 and JAM3. Interacts with members of the p24 cargo receptors. Interacts with CNIH and the cytoplasmic domain of transmembrane TGFA, prior its transit in the trans-Golgi. Interacts with KCTD5. Interacts with TMED2 and TMED3. Interacts with SEC16A in response to ER stress. Interacts (via PDZ GRASP-type 1 domain) with core-glycosylated CFTR in response to ER stress. Post-translationally, myristoylated. Myristoylation is essential for the Golgi targeting. Palmitoylated. In terms of processing, phosphorylated in mitotic cells. ER stress-induced phosphorylation at Ser-443 induces monomerization and subsequent relocalization from Golgi to ER which is essential for mediating unconventional (ER/Golgi-independent) trafficking of CFTR to the cell membrane. In terms of tissue distribution, detected in lung, heart and testis. Colocalized in a polarized fashion in the acrosome region with JAM3 in round spermatids (at protein level).

It localises to the golgi apparatus membrane. The protein localises to the endoplasmic reticulum membrane. It is found in the golgi apparatus. Its function is as follows. Key structural protein of the Golgi apparatus. The membrane cisternae of the Golgi apparatus adhere to each other to form stacks, which are aligned side by side to form the Golgi ribbon. Acting in concert with GORASP1/GRASP65, is required for the formation and maintenance of the Golgi ribbon, and may be dispensable for the formation of stacks. However, other studies suggest that GORASP2 plays a role in assembly and membrane stacking of the Golgi cisternae, and in the process by which Golgi stacks reform after breakdown during mitosis and meiosis. May regulate the intracellular transport and presentation of a defined set of transmembrane proteins, such as transmembrane TGFA. Required for normal acrosome formation during spermiogenesis and normal male fertility, probably by promoting colocalization of JAM2 and JAM3 at contact sites between germ cells and Sertoli cells. Mediates ER stress-induced unconventional (ER/Golgi-independent) trafficking of core-glycosylated CFTR to cell membrane. This Mus musculus (Mouse) protein is Golgi reassembly-stacking protein 2 (Gorasp2).